The primary structure comprises 398 residues: Argininosuccinate synthase (398 aa).

Residue 9 to 17 participates in ATP binding; sequence AYSGGLDTS. Tyr-85 is an L-citrulline binding site. Position 115 (Gly-115) interacts with ATP. The L-aspartate site is built by Thr-117, Asn-121, and Asp-122. Asn-121 serves as a coordination point for L-citrulline. 4 residues coordinate L-citrulline: Arg-125, Ser-173, Glu-258, and Tyr-270.

This sequence belongs to the argininosuccinate synthase family. Type 1 subfamily. In terms of assembly, homotetramer.

Its subcellular location is the cytoplasm. The catalysed reaction is L-citrulline + L-aspartate + ATP = 2-(N(omega)-L-arginino)succinate + AMP + diphosphate + H(+). It functions in the pathway amino-acid biosynthesis; L-arginine biosynthesis; L-arginine from L-ornithine and carbamoyl phosphate: step 2/3. The protein is Argininosuccinate synthase of Streptococcus pneumoniae (strain ATCC BAA-255 / R6).